Reading from the N-terminus, the 415-residue chain is Gamma-glutamyl phosphate reductase (415 aa).

The protein belongs to the gamma-glutamyl phosphate reductase family.

The protein localises to the cytoplasm. The enzyme catalyses L-glutamate 5-semialdehyde + phosphate + NADP(+) = L-glutamyl 5-phosphate + NADPH + H(+). The protein operates within amino-acid biosynthesis; L-proline biosynthesis; L-glutamate 5-semialdehyde from L-glutamate: step 2/2. Functionally, catalyzes the NADPH-dependent reduction of L-glutamate 5-phosphate into L-glutamate 5-semialdehyde and phosphate. The product spontaneously undergoes cyclization to form 1-pyrroline-5-carboxylate. The polypeptide is Gamma-glutamyl phosphate reductase (Shouchella clausii (strain KSM-K16) (Alkalihalobacillus clausii)).